The chain runs to 229 residues: Triosephosphate isomerase (229 aa).

Substrate is bound at residue 16-18; the sequence is NFK. Residue H100 is the Electrophile of the active site. Catalysis depends on E148, which acts as the Proton acceptor. Substrate-binding positions include I153, G188, and 209–210; that span reads AS.

This sequence belongs to the triosephosphate isomerase family. Homotetramer; dimer of dimers.

Its subcellular location is the cytoplasm. It carries out the reaction D-glyceraldehyde 3-phosphate = dihydroxyacetone phosphate. The protein operates within carbohydrate biosynthesis; gluconeogenesis. It participates in carbohydrate degradation; glycolysis; D-glyceraldehyde 3-phosphate from glycerone phosphate: step 1/1. In terms of biological role, involved in the gluconeogenesis. Catalyzes stereospecifically the conversion of dihydroxyacetone phosphate (DHAP) to D-glyceraldehyde-3-phosphate (G3P). The polypeptide is Triosephosphate isomerase (Methanothermobacter thermautotrophicus (strain ATCC 29096 / DSM 1053 / JCM 10044 / NBRC 100330 / Delta H) (Methanobacterium thermoautotrophicum)).